A 389-amino-acid polypeptide reads, in one-letter code: Succinate--CoA ligase [ADP-forming] subunit beta (389 aa).

The region spanning 9 to 244 (KKLFADYGLP…LTQEDPREAE (236 aa)) is the ATP-grasp domain. ATP is bound by residues Lys46, 53-55 (GRG), Glu99, Ala102, and Glu107. Residues Asn199 and Asp213 each coordinate Mg(2+). Substrate is bound by residues Asn264 and 321-323 (GIV).

Belongs to the succinate/malate CoA ligase beta subunit family. In terms of assembly, heterotetramer of two alpha and two beta subunits. It depends on Mg(2+) as a cofactor.

The catalysed reaction is succinate + ATP + CoA = succinyl-CoA + ADP + phosphate. It carries out the reaction GTP + succinate + CoA = succinyl-CoA + GDP + phosphate. It functions in the pathway carbohydrate metabolism; tricarboxylic acid cycle; succinate from succinyl-CoA (ligase route): step 1/1. Functionally, succinyl-CoA synthetase functions in the citric acid cycle (TCA), coupling the hydrolysis of succinyl-CoA to the synthesis of either ATP or GTP and thus represents the only step of substrate-level phosphorylation in the TCA. The beta subunit provides nucleotide specificity of the enzyme and binds the substrate succinate, while the binding sites for coenzyme A and phosphate are found in the alpha subunit. The protein is Succinate--CoA ligase [ADP-forming] subunit beta of Histophilus somni (strain 2336) (Haemophilus somnus).